Reading from the N-terminus, the 103-residue chain is Large ribosomal subunit protein bL21 (103 aa).

The protein belongs to the bacterial ribosomal protein bL21 family. In terms of assembly, part of the 50S ribosomal subunit. Contacts protein L20.

In terms of biological role, this protein binds to 23S rRNA in the presence of protein L20. The polypeptide is Large ribosomal subunit protein bL21 (Salmonella agona (strain SL483)).